A 222-amino-acid chain; its full sequence is uncharacterized protein (222 aa).

N-linked (GlcNAc...) asparagine; by host glycosylation is found at asparagine 4, asparagine 75, asparagine 84, asparagine 104, asparagine 170, and asparagine 175. A helical membrane pass occupies residues 200–220 (LIIIIGIVIILLLIIVMIKTV).

The protein localises to the membrane. This is an uncharacterized protein from Acanthamoeba polyphaga (Amoeba).